The primary structure comprises 237 residues: Purine nucleoside phosphorylase DeoD-type (237 aa).

H4 contributes to the a purine D-ribonucleoside binding site. Phosphate is bound by residues G20, R24, R43, and 87 to 90 (RVGT). Residues 179 to 181 (EME) and 203 to 204 (SD) each bind a purine D-ribonucleoside. D204 (proton donor) is an active-site residue.

It belongs to the PNP/UDP phosphorylase family. As to quaternary structure, homohexamer; trimer of homodimers.

It carries out the reaction a purine D-ribonucleoside + phosphate = a purine nucleobase + alpha-D-ribose 1-phosphate. The catalysed reaction is a purine 2'-deoxy-D-ribonucleoside + phosphate = a purine nucleobase + 2-deoxy-alpha-D-ribose 1-phosphate. Catalyzes the reversible phosphorolytic breakdown of the N-glycosidic bond in the beta-(deoxy)ribonucleoside molecules, with the formation of the corresponding free purine bases and pentose-1-phosphate. This Clostridium beijerinckii (strain ATCC 51743 / NCIMB 8052) (Clostridium acetobutylicum) protein is Purine nucleoside phosphorylase DeoD-type.